A 311-amino-acid chain; its full sequence is Malate dehydrogenase (311 aa).

NAD(+) contacts are provided by residues 7–13 (GAAGGIG) and aspartate 34. Arginine 81 and arginine 87 together coordinate substrate. Residues asparagine 94 and 117–119 (ITN) each bind NAD(+). Residues asparagine 119 and arginine 153 each contribute to the substrate site. Histidine 177 serves as the catalytic Proton acceptor. Methionine 227 contacts NAD(+).

The protein belongs to the LDH/MDH superfamily. MDH type 1 family. In terms of assembly, homodimer.

It catalyses the reaction (S)-malate + NAD(+) = oxaloacetate + NADH + H(+). Its function is as follows. Catalyzes the reversible oxidation of malate to oxaloacetate. The protein is Malate dehydrogenase of Vibrio parahaemolyticus serotype O3:K6 (strain RIMD 2210633).